We begin with the raw amino-acid sequence, 272 residues long: NH(3)-dependent NAD(+) synthetase (272 aa).

Residue 45–52 (GISGGQDS) participates in ATP binding. Asp51 provides a ligand contact to Mg(2+). Arg138 is a binding site for deamido-NAD(+). Thr158 contributes to the ATP binding site. Glu163 is a binding site for Mg(2+). Lys171 and Asp178 together coordinate deamido-NAD(+). Lys187 and Thr209 together coordinate ATP. 258–259 (HK) is a deamido-NAD(+) binding site.

It belongs to the NAD synthetase family. As to quaternary structure, homodimer.

The enzyme catalyses deamido-NAD(+) + NH4(+) + ATP = AMP + diphosphate + NAD(+) + H(+). The protein operates within cofactor biosynthesis; NAD(+) biosynthesis; NAD(+) from deamido-NAD(+) (ammonia route): step 1/1. Catalyzes the ATP-dependent amidation of deamido-NAD to form NAD. Uses ammonia as a nitrogen source. This chain is NH(3)-dependent NAD(+) synthetase, found in Bacillus thuringiensis subsp. konkukian (strain 97-27).